We begin with the raw amino-acid sequence, 572 residues long: Sialate:O-sulfotransferase 1 (572 aa).

At 1 to 14 the chain is on the cytoplasmic side; it reads MAKPFFRLQKFLRR. A helical; Signal-anchor for type II membrane protein transmembrane segment spans residues 15–35; the sequence is TQFLLLFLTAAYLMTGSLLLL. The Extracellular portion of the chain corresponds to 36 to 572; sequence QRARVALPQA…AGLPREYVPR (537 aa). Asn-105 carries an N-linked (GlcNAc...) asparagine glycan. 2 WSC domains span residues 139-231 and 242-337; these read RGNY…YSVG and TATY…DTRC. N-linked (GlcNAc...) asparagine glycosylation occurs at Asn-254.

It belongs to the WSCD family.

It is found in the golgi apparatus membrane. It catalyses the reaction a ganglioside GM1b + 3'-phosphoadenylyl sulfate = an 8-O-sulfo-ganglioside GM1b + adenosine 3',5'-bisphosphate + H(+). In terms of biological role, sialate:O-sulfotransferase which catalyzes 8-O-sulfation at the Sia-glycan level using 3'-phosphoadenosine 5'-phosphosulfate (PAPS) as a donor, forming 8-O-sulfated Sia (Sia8S)-glycans. Displays selectivity toward glycolipids such as GM1 gangliosides. The protein is Sialate:O-sulfotransferase 1 (Wscd1) of Mus musculus (Mouse).